Reading from the N-terminus, the 92-residue chain is Small ribosomal subunit protein uS19 (92 aa).

It belongs to the universal ribosomal protein uS19 family.

In terms of biological role, protein S19 forms a complex with S13 that binds strongly to the 16S ribosomal RNA. In Halalkalibacterium halodurans (strain ATCC BAA-125 / DSM 18197 / FERM 7344 / JCM 9153 / C-125) (Bacillus halodurans), this protein is Small ribosomal subunit protein uS19 (rpsS).